Consider the following 111-residue polypeptide: DIVLTQSPASLAVSLGQRATISCRASESVDNYGISFMNWFQQKPGQPPKLLIYAASNQGSGVPARFSGSGSGTDFSLNIHPMEEDDTAMYFCQQSKEVPWTFGGGTKLEIK.

The interval 1 to 23 is framework-1; it reads DIVLTQSPASLAVSLGQRATISC. Cys23 and Cys92 form a disulfide bridge. A complementarity-determining-1 region spans residues 24 to 38; that stretch reads RASESVDNYGISFMN. Residues 39-53 form a framework-2 region; it reads WFQQKPGQPPKLLIY. Residues 54–60 form a complementarity-determining-2 region; the sequence is AASNQGS. The interval 61–92 is framework-3; the sequence is GVPARFSGSGSGTDFSLNIHPMEEDDTAMYFC. Residues 93–101 form a complementarity-determining-3 region; the sequence is QQSKEVPWT. Residues 102-111 are framework-4; it reads FGGGTKLEIK.

The protein is Ig kappa chain V-III region PC 2880/PC 1229 of Mus musculus (Mouse).